Reading from the N-terminus, the 315-residue chain is L-threo-3-deoxy-hexylosonate aldolase (315 aa).

A substrate-binding site is contributed by 50–51 (SN). The active-site Schiff-base intermediate with substrate is the K174.

This sequence belongs to the DapA family.

It catalyses the reaction 2-dehydro-3-deoxy-L-galactonate = L-glyceraldehyde + pyruvate. The protein operates within carbohydrate acid metabolism. In terms of biological role, mediates the conversion of 2-dehydro-3-deoxy-L-galactonate to pyruvate and L-glyceraldehyde in D-galacturonate catabolic process. This Hypocrea jecorina (Trichoderma reesei) protein is L-threo-3-deoxy-hexylosonate aldolase (lga1).